We begin with the raw amino-acid sequence, 615 residues long: Dihydroxy-acid dehydratase (615 aa).

Residue Asp-81 coordinates Mg(2+). Cys-122 lines the [2Fe-2S] cluster pocket. The Mg(2+) site is built by Asp-123 and Lys-124. An N6-carboxylysine modification is found at Lys-124. Residue Cys-195 coordinates [2Fe-2S] cluster. Mg(2+) is bound at residue Glu-491. The active-site Proton acceptor is the Ser-517.

This sequence belongs to the IlvD/Edd family. In terms of assembly, homodimer. Requires [2Fe-2S] cluster as cofactor. Mg(2+) is required as a cofactor.

The catalysed reaction is (2R)-2,3-dihydroxy-3-methylbutanoate = 3-methyl-2-oxobutanoate + H2O. The enzyme catalyses (2R,3R)-2,3-dihydroxy-3-methylpentanoate = (S)-3-methyl-2-oxopentanoate + H2O. It participates in amino-acid biosynthesis; L-isoleucine biosynthesis; L-isoleucine from 2-oxobutanoate: step 3/4. The protein operates within amino-acid biosynthesis; L-valine biosynthesis; L-valine from pyruvate: step 3/4. Functionally, functions in the biosynthesis of branched-chain amino acids. Catalyzes the dehydration of (2R,3R)-2,3-dihydroxy-3-methylpentanoate (2,3-dihydroxy-3-methylvalerate) into 2-oxo-3-methylpentanoate (2-oxo-3-methylvalerate) and of (2R)-2,3-dihydroxy-3-methylbutanoate (2,3-dihydroxyisovalerate) into 2-oxo-3-methylbutanoate (2-oxoisovalerate), the penultimate precursor to L-isoleucine and L-valine, respectively. This Pseudoalteromonas atlantica (strain T6c / ATCC BAA-1087) protein is Dihydroxy-acid dehydratase.